The primary structure comprises 354 residues: Protein Wnt-11 (354 aa).

A signal peptide spans 1-24 (MKPSPQFFLAAFLSLILQTGICYG). N-linked (GlcNAc...) asparagine glycosylation is found at N40 and N90. Intrachain disulfides connect C80–C91, C130–C138, C140–C157, C209–C223, C211–C218, C283–C314, C299–C309, C313–C353, C329–C344, C331–C341, and C336–C337. The O-palmitoleoyl serine; by PORCN moiety is linked to residue S215. N300 and N304 each carry an N-linked (GlcNAc...) asparagine glycan.

The protein belongs to the Wnt family. Post-translationally, palmitoleoylation is required for efficient binding to frizzled receptors. Depalmitoleoylation leads to Wnt signaling pathway inhibition. In terms of tissue distribution, expressed in the dermatome. The expression domain is mutually exclusive to the other Wnt genes.

It is found in the secreted. The protein localises to the extracellular space. It localises to the extracellular matrix. In terms of biological role, ligand for members of the frizzled family of seven transmembrane receptors. May play a role in the formation of dermal structure, both limb and feather buds. Is likely to signal over only few cell diameters. The sequence is that of Protein Wnt-11 (WNT11) from Gallus gallus (Chicken).